The sequence spans 158 residues: 2-C-methyl-D-erythritol 2,4-cyclodiphosphate synthase (158 aa).

Residues aspartate 8 and histidine 10 each coordinate a divalent metal cation. 4-CDP-2-C-methyl-D-erythritol 2-phosphate is bound by residues 8–10 and 34–35; these read DVH and HS. Histidine 42 provides a ligand contact to a divalent metal cation. 4-CDP-2-C-methyl-D-erythritol 2-phosphate contacts are provided by residues 56–58, 132–135, and arginine 142; these read DIG and TTNE.

This sequence belongs to the IspF family. As to quaternary structure, homotrimer. A divalent metal cation is required as a cofactor.

It catalyses the reaction 4-CDP-2-C-methyl-D-erythritol 2-phosphate = 2-C-methyl-D-erythritol 2,4-cyclic diphosphate + CMP. Its pathway is isoprenoid biosynthesis; isopentenyl diphosphate biosynthesis via DXP pathway; isopentenyl diphosphate from 1-deoxy-D-xylulose 5-phosphate: step 4/6. In terms of biological role, involved in the biosynthesis of isopentenyl diphosphate (IPP) and dimethylallyl diphosphate (DMAPP), two major building blocks of isoprenoid compounds. Catalyzes the conversion of 4-diphosphocytidyl-2-C-methyl-D-erythritol 2-phosphate (CDP-ME2P) to 2-C-methyl-D-erythritol 2,4-cyclodiphosphate (ME-CPP) with a corresponding release of cytidine 5-monophosphate (CMP). This Chlorobium phaeobacteroides (strain DSM 266 / SMG 266 / 2430) protein is 2-C-methyl-D-erythritol 2,4-cyclodiphosphate synthase.